The following is a 115-amino-acid chain: Large ribosomal subunit protein uL22 (115 aa).

Belongs to the universal ribosomal protein uL22 family. As to quaternary structure, part of the 50S ribosomal subunit.

This protein binds specifically to 23S rRNA; its binding is stimulated by other ribosomal proteins, e.g. L4, L17, and L20. It is important during the early stages of 50S assembly. It makes multiple contacts with different domains of the 23S rRNA in the assembled 50S subunit and ribosome. Its function is as follows. The globular domain of the protein is located near the polypeptide exit tunnel on the outside of the subunit, while an extended beta-hairpin is found that lines the wall of the exit tunnel in the center of the 70S ribosome. This Limosilactobacillus fermentum (strain NBRC 3956 / LMG 18251) (Lactobacillus fermentum) protein is Large ribosomal subunit protein uL22.